A 242-amino-acid chain; its full sequence is Probable septum site-determining protein MinC (242 aa).

A compositionally biased stretch (basic and acidic residues) spans 120–135 (APKKVEEKPAEPEHKP). The interval 120–144 (APKKVEEKPAEPEHKPSRIVTSPVR) is disordered.

This sequence belongs to the MinC family. Interacts with MinD and FtsZ.

In terms of biological role, cell division inhibitor that blocks the formation of polar Z ring septums. Rapidly oscillates between the poles of the cell to destabilize FtsZ filaments that have formed before they mature into polar Z rings. Prevents FtsZ polymerization. This is Probable septum site-determining protein MinC from Ectopseudomonas mendocina (strain ymp) (Pseudomonas mendocina).